Consider the following 117-residue polypeptide: MIPGMGMNPKQLKQMQRAMKQMGMDMKDLRGVEEVVIKLKKKEIIIKNPRVNVMDFMGQKTYQVTGKARECDLEAEVKIPDDDIELVMNQTGVSREEATRALQETGGDLAEAIMRLS.

The NAC-A/B domain maps to 9–77 (PKQLKQMQRA…ARECDLEAEV (69 aa)).

Belongs to the NAC-alpha family. In terms of assembly, homodimer. Interacts with the ribosome. Binds ribosomal RNA.

In terms of biological role, contacts the emerging nascent chain on the ribosome. The polypeptide is Nascent polypeptide-associated complex protein (Methanothermobacter marburgensis (strain ATCC BAA-927 / DSM 2133 / JCM 14651 / NBRC 100331 / OCM 82 / Marburg) (Methanobacterium thermoautotrophicum)).